The primary structure comprises 157 residues: Ribosome maturation factor RimP (157 aa).

Belongs to the RimP family.

Its subcellular location is the cytoplasm. Its function is as follows. Required for maturation of 30S ribosomal subunits. In Levilactobacillus brevis (strain ATCC 367 / BCRC 12310 / CIP 105137 / JCM 1170 / LMG 11437 / NCIMB 947 / NCTC 947) (Lactobacillus brevis), this protein is Ribosome maturation factor RimP.